A 321-amino-acid polypeptide reads, in one-letter code: G-protein coupled receptor homolog ECRF3 (321 aa).

The Extracellular segment spans residues 1–34 (MEVKLDFSSEDFSNYSYNYSGDIYYGDVAPCVVN). Asn14 and Asn18 each carry an N-linked (GlcNAc...) asparagine; by host glycan. Residues 35–51 (FLISESALAFIYVLMFL) traverse the membrane as a helical segment. The Cytoplasmic portion of the chain corresponds to 52–76 (CNAIGNSLVLRTFLKYRAQAQSFDY). The chain crosses the membrane as a helical span at residues 77 to 93 (LMMGFCLNSLFLAGYLL). At 94-124 (MRLLRMFEIFMNTELCKLEAFFLNLSIYWSP) the chain is on the extracellular side. N-linked (GlcNAc...) asparagine; by host glycosylation occurs at Asn117. Residues 125 to 141 (FILVFISVLRCLLIFCA) form a helical membrane-spanning segment. The Cytoplasmic portion of the chain corresponds to 142 to 149 (TRLWVKKT). A helical membrane pass occupies residues 150 to 166 (LIGQVFLCCSFVLACFG). The Extracellular segment spans residues 167–196 (ALPHVMVTSYYEPSSCIEEDGVLTEQLRTK). Residues 197-215 (LNTFHTWYSFAGPLFITVI) form a helical membrane-spanning segment. Over 216–234 (CYSMSCYKLFKTKLSKRAE) the chain is Cytoplasmic. Residues 235–251 (VVTIITMTTLLFIVFCI) traverse the membrane as a helical segment. The Extracellular segment spans residues 252–286 (PYYIMESIDTLLRVGVIEETCAKRSAIVYGIQCTY). Residues 287–303 (MLLVLYYCMLPLMFAMF) form a helical membrane-spanning segment. Residues 304–321 (GSLFRQRMAAWCKTICHC) are Cytoplasmic-facing.

Belongs to the G-protein coupled receptor 1 family.

Its subcellular location is the host cell membrane. May be highly relevant to the process of cellular transformation and rapid T-cell proliferation effected by HVS during latent infections of T-cells in susceptible hosts. The sequence is that of G-protein coupled receptor homolog ECRF3 (74) from Saimiri sciureus (Common squirrel monkey).